The following is a 41-amino-acid chain: Large ribosomal subunit protein bL36 (41 aa).

The protein belongs to the bacterial ribosomal protein bL36 family.

The polypeptide is Large ribosomal subunit protein bL36 (Edwardsiella ictaluri (strain 93-146)).